We begin with the raw amino-acid sequence, 464 residues long: ATP synthase subunit beta (464 aa).

151 to 158 (GGAGVGKT) contacts ATP.

The protein belongs to the ATPase alpha/beta chains family. As to quaternary structure, F-type ATPases have 2 components, CF(1) - the catalytic core - and CF(0) - the membrane proton channel. CF(1) has five subunits: alpha(3), beta(3), gamma(1), delta(1), epsilon(1). CF(0) has three main subunits: a(1), b(2) and c(9-12). The alpha and beta chains form an alternating ring which encloses part of the gamma chain. CF(1) is attached to CF(0) by a central stalk formed by the gamma and epsilon chains, while a peripheral stalk is formed by the delta and b chains.

The protein localises to the cell membrane. The catalysed reaction is ATP + H2O + 4 H(+)(in) = ADP + phosphate + 5 H(+)(out). Produces ATP from ADP in the presence of a proton gradient across the membrane. The catalytic sites are hosted primarily by the beta subunits. This chain is ATP synthase subunit beta, found in Bacillus cytotoxicus (strain DSM 22905 / CIP 110041 / 391-98 / NVH 391-98).